Reading from the N-terminus, the 695-residue chain is Polyribonucleotide nucleotidyltransferase (695 aa).

Mg(2+) is bound by residues Asp486 and Asp492. In terms of domain architecture, KH spans Pro553–Ile612. An S1 motif domain is found at Gly622–Lys690.

Belongs to the polyribonucleotide nucleotidyltransferase family. The cofactor is Mg(2+).

The protein localises to the cytoplasm. The enzyme catalyses RNA(n+1) + phosphate = RNA(n) + a ribonucleoside 5'-diphosphate. Its function is as follows. Involved in mRNA degradation. Catalyzes the phosphorolysis of single-stranded polyribonucleotides processively in the 3'- to 5'-direction. The polypeptide is Polyribonucleotide nucleotidyltransferase (Chlamydia trachomatis serovar L2 (strain ATCC VR-902B / DSM 19102 / 434/Bu)).